Consider the following 915-residue polypeptide: Transferrin-binding protein A (915 aa).

The signal sequence occupies residues 1–24; that stretch reads MQQQHLFRLNILCLSLMTALPAYA. The TonB box signature appears at 38–45; sequence DTIQVKAK. A TBDR plug domain is found at 51-176; it reads RDNEVTGLGK…LAGSVAFQTK (126 aa). One can recognise a TBDR beta-barrel domain in the interval 187–915; sequence QWGIQSKTAY…NYTFSLEMKF (729 aa). Residues 526 to 540 are compositionally biased toward polar residues; sequence LKTPPQNNGKKTSPN. The disordered stretch occupies residues 526-545; it reads LKTPPQNNGKKTSPNGREKN. Positions 898 to 915 match the TonB C-terminal box motif; that stretch reads NRYAAPGRNYTFSLEMKF.

This sequence belongs to the TonB-dependent receptor family. In terms of assembly, binds both human apo- and holo-transferrin (TF), via the TF C-terminus. Forms a large complex with TF and TbpB.

The protein resides in the cell outer membrane. Neisseria acquires iron by extracting it from serum transferrin (TF) in its human host. Acts as a TF receptor and is required for TF utilization. Binds both apo- and holo-TF, via the TF C-terminus. This Neisseria gonorrhoeae protein is Transferrin-binding protein A.